Reading from the N-terminus, the 178-residue chain is Cytidylate kinase (178 aa).

Position 7–15 (7–15) interacts with ATP; that stretch reads GLPGTGTTT.

This sequence belongs to the cytidylate kinase family. Type 2 subfamily.

It is found in the cytoplasm. It carries out the reaction CMP + ATP = CDP + ADP. The catalysed reaction is dCMP + ATP = dCDP + ADP. The protein is Cytidylate kinase of Methanococcus maripaludis (strain C5 / ATCC BAA-1333).